Reading from the N-terminus, the 607-residue chain is Arginine--tRNA ligase (607 aa).

The 'HIGH' region signature appears at 147 to 157 (PNIAKEMHVGH).

Belongs to the class-I aminoacyl-tRNA synthetase family. Monomer.

The protein localises to the cytoplasm. It catalyses the reaction tRNA(Arg) + L-arginine + ATP = L-arginyl-tRNA(Arg) + AMP + diphosphate. In Prochlorococcus marinus (strain NATL2A), this protein is Arginine--tRNA ligase.